A 218-amino-acid chain; its full sequence is Deoxyribose-phosphate aldolase (218 aa).

Residue aspartate 92 is the Proton donor/acceptor of the active site. The Schiff-base intermediate with acetaldehyde role is filled by lysine 156. Lysine 185 functions as the Proton donor/acceptor in the catalytic mechanism.

This sequence belongs to the DeoC/FbaB aldolase family. DeoC type 1 subfamily.

The protein localises to the cytoplasm. It carries out the reaction 2-deoxy-D-ribose 5-phosphate = D-glyceraldehyde 3-phosphate + acetaldehyde. Its pathway is carbohydrate degradation; 2-deoxy-D-ribose 1-phosphate degradation; D-glyceraldehyde 3-phosphate and acetaldehyde from 2-deoxy-alpha-D-ribose 1-phosphate: step 2/2. In terms of biological role, catalyzes a reversible aldol reaction between acetaldehyde and D-glyceraldehyde 3-phosphate to generate 2-deoxy-D-ribose 5-phosphate. This is Deoxyribose-phosphate aldolase from Desulfitobacterium hafniense (strain Y51).